An 837-amino-acid polypeptide reads, in one-letter code: Dapper homolog 2 (837 aa).

Residues 65-113 are a coiled coil; the sequence is ENVSKEELRLEATLSLLKQQLTRLRRQDVGLKTHLQQLDQQITELKLDV. Disordered regions lie at residues 189–265, 424–497, 512–564, 600–649, and 738–782; these read ADES…PKYQ, HGKH…DKSS, GSQR…KQSG, QQIP…HTQR, and EMSD…EDEG. Polar residues-rich tracts occupy residues 246–265 and 432–445; these read VKSS…PKYQ and LDLQ…NNTA. Composition is skewed to basic and acidic residues over residues 456-466, 486-496, and 548-560; these read ASEKRSGHFPK, EGSRASCHDKS, and LSRE…RTDL. Residues 741–759 are compositionally biased toward polar residues; it reads DYTTNRFGDSESSQGSQTA. Over residues 768 to 782 the composition is skewed to acidic residues; sequence LDEEDLLEEEEEDEG. Positions 834-837 match the PDZ-binding motif; the sequence is MTLV.

It belongs to the dapper family. Interacts with dvl2.

It is found in the cytoplasm. The protein localises to the late endosome. Its subcellular location is the nucleus. It localises to the cell membrane. Functionally, involved in regulation of intracellular signaling pathways during development. Specifically thought to play a role in canonical and/or non-canonical Wnt signaling pathways through interaction with DSH (Dishevelled) family proteins. Positive regulator of the Wnt signaling pathway which acts downstream of wnt1 indicative for non-canonical Wnt signaling. Also negatively regulates the Nodal signaling pathway, possibly by promoting the lysosomal degradation of Nodal receptors. Required for convergent extension movements in gastrulation. The chain is Dapper homolog 2 (dact2) from Danio rerio (Zebrafish).